Consider the following 183-residue polypeptide: Microfibrillar-associated protein 2 (183 aa).

Positions 1–17 (MRAASLFLLFLPAGLLA) are cleaved as a signal peptide. Glutamine 18 bears the Pyrrolidone carboxylic acid mark. Residue glutamine 20 forms an Isoglutamyl lysine isopeptide (Gln-Lys) (interchain with K-?) linkage. Residues tyrosine 47, tyrosine 48, and tyrosine 50 each carry the sulfotyrosine modification. In terms of domain architecture, ShKT spans 153-183 (CRDKFSKCGVLASSGLCQSVAAACARSCGGC). Cystine bridges form between cysteine 153–cysteine 183, cysteine 160–cysteine 176, and cysteine 169–cysteine 180.

The protein belongs to the MFAP family. In terms of assembly, forms a ternary complex with BGN and ELN. Interacts with FBN1 (via N-terminal domain) and FBN2. O-glycosylated; glycans consist of Gal(beta1-3)GalNAc. In terms of processing, forms intermolecular disulfide bonds either with other MAGP-1 molecules or with other components of the microfibrils. Post-translationally, forms transglutaminase cross-links with tropoelastin.

Its subcellular location is the secreted. The protein resides in the extracellular space. It localises to the extracellular matrix. In terms of biological role, component of the elastin-associated microfibrils. The polypeptide is Microfibrillar-associated protein 2 (MFAP2) (Bos taurus (Bovine)).